Here is a 444-residue protein sequence, read N- to C-terminus: Homogentisate 1,2-dioxygenase (444 aa).

H298 serves as the catalytic Proton acceptor. The Fe cation site is built by H341 and E347. The homogentisate site is built by Y356 and H377. A Fe cation-binding site is contributed by H377.

The protein belongs to the homogentisate dioxygenase family. In terms of assembly, hexamer; dimer of trimers. It depends on Fe cation as a cofactor.

It carries out the reaction homogentisate + O2 = 4-maleylacetoacetate + H(+). The protein operates within amino-acid degradation; L-phenylalanine degradation; acetoacetate and fumarate from L-phenylalanine: step 4/6. In terms of biological role, involved in the catabolism of homogentisate (2,5-dihydroxyphenylacetate or 2,5-OH-PhAc), a central intermediate in the degradation of phenylalanine and tyrosine. Catalyzes the oxidative ring cleavage of the aromatic ring of homogentisate to yield maleylacetoacetate. The sequence is that of Homogentisate 1,2-dioxygenase from Burkholderia ambifaria (strain ATCC BAA-244 / DSM 16087 / CCUG 44356 / LMG 19182 / AMMD) (Burkholderia cepacia (strain AMMD)).